The following is a 255-amino-acid chain: Adenosylcobinamide-GDP ribazoletransferase (255 aa).

6 helical membrane passes run 24–44 (LIAY…SLYV), 45–65 (AIYG…IYIV), 98–118 (VGAG…ISLS), 122–142 (LYIG…MMMI), 164–184 (KHDS…ALLS), and 187–207 (SIMI…MAVI).

It belongs to the CobS family. It depends on Mg(2+) as a cofactor.

The protein resides in the cell membrane. The enzyme catalyses alpha-ribazole + adenosylcob(III)inamide-GDP = adenosylcob(III)alamin + GMP + H(+). It catalyses the reaction alpha-ribazole 5'-phosphate + adenosylcob(III)inamide-GDP = adenosylcob(III)alamin 5'-phosphate + GMP + H(+). It functions in the pathway cofactor biosynthesis; adenosylcobalamin biosynthesis; adenosylcobalamin from cob(II)yrinate a,c-diamide: step 7/7. In terms of biological role, joins adenosylcobinamide-GDP and alpha-ribazole to generate adenosylcobalamin (Ado-cobalamin). Also synthesizes adenosylcobalamin 5'-phosphate from adenosylcobinamide-GDP and alpha-ribazole 5'-phosphate. In Thermoplasma acidophilum (strain ATCC 25905 / DSM 1728 / JCM 9062 / NBRC 15155 / AMRC-C165), this protein is Adenosylcobinamide-GDP ribazoletransferase.